We begin with the raw amino-acid sequence, 257 residues long: Glutamate racemase (257 aa).

Residues 12–13 and 44–45 contribute to the substrate site; these read DS and YG. The active-site Proton donor/acceptor is C75. Residue 76 to 77 participates in substrate binding; it reads NT. The active-site Proton donor/acceptor is the C185. 186–187 is a binding site for substrate; that stretch reads TH.

Belongs to the aspartate/glutamate racemases family.

The catalysed reaction is L-glutamate = D-glutamate. Its pathway is cell wall biogenesis; peptidoglycan biosynthesis. Provides the (R)-glutamate required for cell wall biosynthesis. This Clostridium botulinum (strain Kyoto / Type A2) protein is Glutamate racemase.